The sequence spans 369 residues: Queuine tRNA-ribosyltransferase (369 aa).

The Proton acceptor role is filled by aspartate 89. Residues 89–93, aspartate 142, glutamine 184, and glycine 211 contribute to the substrate site; that span reads DSGGF. The RNA binding stretch occupies residues 242 to 248; the sequence is GGGSPEL. Aspartate 261 acts as the Nucleophile in catalysis. Residues 266-270 are RNA binding; important for wobble base 34 recognition; the sequence is TRIAR. 4 residues coordinate Zn(2+): cysteine 299, cysteine 301, cysteine 304, and histidine 330.

It belongs to the queuine tRNA-ribosyltransferase family. Homodimer. Within each dimer, one monomer is responsible for RNA recognition and catalysis, while the other monomer binds to the replacement base PreQ1. Zn(2+) is required as a cofactor.

The enzyme catalyses 7-aminomethyl-7-carbaguanine + guanosine(34) in tRNA = 7-aminomethyl-7-carbaguanosine(34) in tRNA + guanine. The protein operates within tRNA modification; tRNA-queuosine biosynthesis. Functionally, catalyzes the base-exchange of a guanine (G) residue with the queuine precursor 7-aminomethyl-7-deazaguanine (PreQ1) at position 34 (anticodon wobble position) in tRNAs with GU(N) anticodons (tRNA-Asp, -Asn, -His and -Tyr). Catalysis occurs through a double-displacement mechanism. The nucleophile active site attacks the C1' of nucleotide 34 to detach the guanine base from the RNA, forming a covalent enzyme-RNA intermediate. The proton acceptor active site deprotonates the incoming PreQ1, allowing a nucleophilic attack on the C1' of the ribose to form the product. After dissociation, two additional enzymatic reactions on the tRNA convert PreQ1 to queuine (Q), resulting in the hypermodified nucleoside queuosine (7-(((4,5-cis-dihydroxy-2-cyclopenten-1-yl)amino)methyl)-7-deazaguanosine). This Thermotoga sp. (strain RQ2) protein is Queuine tRNA-ribosyltransferase.